Here is a 516-residue protein sequence, read N- to C-terminus: GTPase Obg (516 aa).

Residues 4-161 form the Obg domain; the sequence is PTFVDRVTLH…LEIVLELKVV (158 aa). The OBG-type G domain maps to 162–332; it reads ADIGLVGFPS…LTFAMAGIVE (171 aa). GTP is bound by residues 168–175, 193–197, 214–217, 284–287, and 313–315; these read GFPSAGKS, FTTLV, DVPG, NKVD, and SAA. Mg(2+)-binding residues include Ser-175 and Thr-195. One can recognise an OCT domain in the interval 351–432; the sequence is PSVDGSDAFT…ENAVVFDFKP (82 aa). Positions 466 to 491 are enriched in basic and acidic residues; it reads AMADRAEGETRADVARRLDRPAREDG. A disordered region spans residues 466-516; it reads AMADRAEGETRADVARRLDRPAREDGGAYGPQSYEIGGRDDPDWAEEDLGE.

Belongs to the TRAFAC class OBG-HflX-like GTPase superfamily. OBG GTPase family. Monomer. It depends on Mg(2+) as a cofactor.

It localises to the cytoplasm. An essential GTPase which binds GTP, GDP and possibly (p)ppGpp with moderate affinity, with high nucleotide exchange rates and a fairly low GTP hydrolysis rate. Plays a role in control of the cell cycle, stress response, ribosome biogenesis and in those bacteria that undergo differentiation, in morphogenesis control. The polypeptide is GTPase Obg (Nocardioides sp. (strain ATCC BAA-499 / JS614)).